The sequence spans 206 residues: Imidazoleglycerol-phosphate dehydratase (206 aa).

Belongs to the imidazoleglycerol-phosphate dehydratase family.

Its subcellular location is the cytoplasm. It carries out the reaction D-erythro-1-(imidazol-4-yl)glycerol 3-phosphate = 3-(imidazol-4-yl)-2-oxopropyl phosphate + H2O. It functions in the pathway amino-acid biosynthesis; L-histidine biosynthesis; L-histidine from 5-phospho-alpha-D-ribose 1-diphosphate: step 6/9. The sequence is that of Imidazoleglycerol-phosphate dehydratase from Cutibacterium acnes (strain DSM 16379 / KPA171202) (Propionibacterium acnes).